The sequence spans 200 residues: UPF0316 protein SACOL1973 (200 aa).

3 helical membrane-spanning segments follow: residues 8-28 (PWLMVLTIFIINVCYVTFLTM), 40-60 (IAASVSFLEVLVYIVGLGLVM), and 66-86 (IQNIIAYAFGFSIGIIVGMKI).

It belongs to the UPF0316 family.

It is found in the cell membrane. The protein is UPF0316 protein SACOL1973 of Staphylococcus aureus (strain COL).